The primary structure comprises 146 residues: Cysteine protease inhibitor 3 (146 aa).

2 disulfide bridges follow: Cys8–Cys60 and Cys109–Cys115.

It belongs to the protease inhibitor I3 (leguminous Kunitz-type inhibitor) family.

Its subcellular location is the vacuole. Functionally, inhibitor of cysteine proteases. May protect the plant by inhibiting proteases of invading organisms. The chain is Cysteine protease inhibitor 3 from Solanum tuberosum (Potato).